The primary structure comprises 253 residues: Ribosome-inactivating protein saporin-5 (253 aa).

E176 is a catalytic residue.

It belongs to the ribosome-inactivating protein family. Type 1 RIP subfamily.

The enzyme catalyses Endohydrolysis of the N-glycosidic bond at one specific adenosine on the 28S rRNA.. In terms of biological role, ribosome-inactivating protein of type 1, inhibits protein synthesis in animal cells. This is Ribosome-inactivating protein saporin-5 (SAP5) from Saponaria officinalis (Common soapwort).